The primary structure comprises 696 residues: Chitin synthase regulator SKT5 (696 aa).

2 disordered regions span residues 37-67 and 90-145; these read GQDF…SANQ and QEED…IKKR. A compositionally biased stretch (basic and acidic residues) spans 41–53; sequence SDNKENRENRDNE. A compositionally biased stretch (low complexity) spans 104–126; it reads LNNSNNTSLSSLGSTPTNSPSPG. Polar residues predominate over residues 129-139; that stretch reads RQTNSSTSLTK. Position 148 is a phosphoserine (Ser148). Sel1-like repeat units lie at residues 271–306, 307–342, 343–382, 386–423, 424–460, 461–498, and 499–534; these read SDAQ…KHGH, IESA…SRNH, PSAM…ARAN, AAAP…SLGH, VPSA…LKGD, SVAM…NAGL, and PKAQ…GNED. A phosphoserine mark is found at Ser561 and Ser563. Thr564 bears the Phosphothreonine mark. Composition is skewed to polar residues over residues 576-593, 605-634, and 651-661; these read SNVG…TFFT, LQIN…SSAK, and VSLSNMGSSNM. The interval 576–696 is disordered; the sequence is SNVGSNSRVS…GKKKKDCVIM (121 aa). Over residues 662 to 675 the composition is skewed to basic and acidic residues; that stretch reads IRKDFPAVKTESKK. A compositionally biased stretch (basic residues) spans 680–696; the sequence is KNKKDKQGKKKKDCVIM. Cys693 carries the cysteine methyl ester modification. Cys693 carries S-farnesyl cysteine lipidation. Positions 694 to 696 are cleaved as a propeptide — removed in mature form; it reads VIM.

Belongs to the SKT5 family. As to quaternary structure, may interact with CHS3 and seems to be an adapter (along with BNI4) to link CHS3 to septins. In terms of processing, farnesylation is required for chitin synthase CHS3 activity but is not required for SKT5 membrane association.

The protein resides in the cell membrane. In terms of biological role, activator of the chitin synthase CHS3 which polymerizes chitin, a structural polymer of the fungal cell wall. The polypeptide is Chitin synthase regulator SKT5 (Saccharomyces cerevisiae (strain ATCC 204508 / S288c) (Baker's yeast)).